Consider the following 21-residue polypeptide: Peptidyl-prolyl cis-trans isomerase (21 aa).

Residues 1-21 are disordered; it reads ENFKIKHTEPGLLSMANAGKN.

It belongs to the cyclophilin-type PPIase family. PPIase A subfamily.

The enzyme catalyses [protein]-peptidylproline (omega=180) = [protein]-peptidylproline (omega=0). Functionally, PPIases accelerate the folding of proteins. It catalyzes the cis-trans isomerization of proline imidic peptide bonds in oligopeptides. The polypeptide is Peptidyl-prolyl cis-trans isomerase (Naegleria fowleri (Brain eating amoeba)).